Reading from the N-terminus, the 330-residue chain is Basic leucine zipper 2 (330 aa).

Positions 1–207 (MAQLPPKIPT…NRQSAQRSRV (207 aa)) are disordered. A compositionally biased stretch (basic residues) spans 21–34 (GHHHHAAHGHHHQR). Positions 45–56 (PLPPFPLPPPAP) are enriched in pro residues. Composition is skewed to low complexity over residues 57–72 (ANGG…QHQP) and 139–151 (QPAA…SSPS). Positions 155 to 166 (SMNDEKQDKGET) are enriched in basic and acidic residues. Residues 188–244 (DPKRVKRILANRQSAQRSRVRKLQYISELERSVTSLQTEVSALSPRVAFLDHQRSLL) enclose the bZIP domain. Residues 190–209 (KRVKRILANRQSAQRSRVRK) are basic motif. The segment at 216-244 (LERSVTSLQTEVSALSPRVAFLDHQRSLL) is leucine-zipper. A disordered region spans residues 267-330 (GGTEEGDREA…LVIGRDPDAL (64 aa)).

As to expression, expressed in roots, shoots and panicles.

It localises to the nucleus. Transcription regulator. The protein is Basic leucine zipper 2 (BZIP02) of Oryza sativa subsp. japonica (Rice).